The sequence spans 261 residues: tRNA pseudouridine synthase A (261 aa).

Asp-51 serves as the catalytic Nucleophile. Tyr-109 lines the substrate pocket.

This sequence belongs to the tRNA pseudouridine synthase TruA family. As to quaternary structure, homodimer.

It catalyses the reaction uridine(38/39/40) in tRNA = pseudouridine(38/39/40) in tRNA. In terms of biological role, formation of pseudouridine at positions 38, 39 and 40 in the anticodon stem and loop of transfer RNAs. This is tRNA pseudouridine synthase A from Shewanella loihica (strain ATCC BAA-1088 / PV-4).